Consider the following 465-residue polypeptide: GTPase Der (465 aa).

EngA-type G domains are found at residues 3-166 and 184-358; these read FLVA…LNEY and IHFS…ACAN. GTP is bound by residues 9–16, 56–60, 118–121, 190–197, 237–241, and 302–305; these read GRANVGKS, DTGGI, NKVD, GRPNVGKS, DTAGV, and NKWD. The KH-like domain occupies 359–443; sequence KKITTADATC…PIVFEFKQSE (85 aa). The tract at residues 446–465 is disordered; the sequence is FADRKNKRSKDEGSKSKKVK.

The protein belongs to the TRAFAC class TrmE-Era-EngA-EngB-Septin-like GTPase superfamily. EngA (Der) GTPase family. Associates with the 50S ribosomal subunit.

In terms of biological role, GTPase that plays an essential role in the late steps of ribosome biogenesis. This chain is GTPase Der, found in Francisella tularensis subsp. mediasiatica (strain FSC147).